Here is a 1125-residue protein sequence, read N- to C-terminus: RGS domain-containing serine/threonine-protein kinase A (1125 aa).

Disordered regions lie at residues 1–77 (MKTS…GGNK), 96–191 (RRNS…IVDD), 276–416 (GISP…NNTN), and 455–480 (YVGG…PAPE). Composition is skewed to low complexity over residues 7–30 (SSNS…NNNN) and 37–66 (SSKS…LSSG). The span at 121 to 136 (LDSKPPKPFDEKDDPI) shows a compositional bias: basic and acidic residues. Low complexity-rich tracts occupy residues 159–191 (QPQQ…IVDD) and 281–342 (NNNN…LNNS). Polar residues predominate over residues 343 to 361 (PRYLNSSSSPRSMQHLSSK). A compositionally biased stretch (low complexity) spans 362–416 (ITTTTTTTTTTTTTTSDDNNGNTNNNISNNNNIINNSNNNSNSNNNNNNNINNTN). Residues 487-603 (KFIETITDPT…ISSPFNPEWK (117 aa)) enclose the RGS domain. Residues 617–685 (TTTQPINNFN…NNSNGSNTSS (69 aa)) show a composition bias toward low complexity. Disordered stretches follow at residues 617–710 (TTTQ…KERS) and 723–762 (NLSN…SNNN). Residues 690 to 710 (ERLDNIKGNRERVDSNGKERS) show a composition bias toward basic and acidic residues. The segment covering 723 to 735 (NLSNHSNSSSNSN) has biased composition (low complexity). Over residues 736–748 (GKDKDKDKDKNEN) the composition is skewed to basic and acidic residues. The segment covering 749 to 762 (TTDNSNNNNNSNNN) has biased composition (low complexity). The Protein kinase domain maps to 842–1097 (VSIHKWIASG…YLESIIYPSV (256 aa)). Residues 848–856 (IASGSSGRV) and Lys-869 each bind ATP. The Proton acceptor role is filled by Asp-963.

It belongs to the protein kinase superfamily. TKL Ser/Thr protein kinase family. In terms of processing, autophosphorylated.

The protein resides in the cytoplasm. The protein localises to the cell membrane. The catalysed reaction is L-seryl-[protein] + ATP = O-phospho-L-seryl-[protein] + ADP + H(+). It carries out the reaction L-threonyl-[protein] + ATP = O-phospho-L-threonyl-[protein] + ADP + H(+). With respect to regulation, up-regulated by cAMP. Its function is as follows. Serine/threonine kinase involved in negative regulation of chemotaxis. This is RGS domain-containing serine/threonine-protein kinase A (rckA) from Dictyostelium discoideum (Social amoeba).